The primary structure comprises 466 residues: Argininosuccinate lyase (466 aa).

It belongs to the lyase 1 family. Argininosuccinate lyase subfamily.

Its subcellular location is the cytoplasm. It catalyses the reaction 2-(N(omega)-L-arginino)succinate = fumarate + L-arginine. It participates in amino-acid biosynthesis; L-arginine biosynthesis; L-arginine from L-ornithine and carbamoyl phosphate: step 3/3. The protein is Argininosuccinate lyase of Campylobacter concisus (strain 13826).